Reading from the N-terminus, the 473-residue chain is MKTLYSLRRFYPVETLFNGTLTLAGRDQETTGFAWWAGNARLINLSGKLLGAHVAHAGLIVFWAGAMNLFEVAHFVPEKPMYEQGLILLPHLATLGWGVGPGGEVIDTFPYFVSGVLHLISSAVLGFGGIYHALLGPETLEESFPFFGYVWKDRNKMTTILGIHLILLGIGAFLLVFKALYFGGVYDTWAPGGGDVRKITNVTLSPSIIFGCLLKSPFGGEGWIVSVDDLEDIIGGHVWIGVICILGGIWHILTKPFAWARRALVWSGEAYLSYSLAALSVFGFIACCFVWFNNTAYPSEFYGPTGPEASQAQAFTFLVRDQRLGANVGSAQGPTGLGKYLMRSPTGEVIFGGETMRFWDLRAPWLEPLRGPNGLDLSRLKKDIQPWQERRSAEYMTHAPLGSLNSVGGVATEINAVNYVSPRSWLSTSHFVLGFFLFVGHLWHAGRARAAAAGFEKGIDRDFEPVLSMTPLN.

The propeptide occupies 1–14 (MKTLYSLRRFYPVE). N-acetylthreonine is present on Thr-15. Thr-15 carries the phosphothreonine modification. 5 consecutive transmembrane segments (helical) span residues 69-93 (LFEVAHFVPEKPMYEQGLILLPHLA), 134-155 (LLGPETLEESFPFFGYVWKDRN), 178-200 (KALYFGGVYDTWAPGGGDVRKIT), 255-275 (KPFAWARRALVWSGEAYLSYS), and 291-312 (WFNNTAYPSEFYGPTGPEASQA). Glu-367 is a binding site for [CaMn4O5] cluster. A propeptide spanning residues 426-473 (LSTSHFVLGFFLFVGHLWHAGRARAAAAGFEKGIDRDFEPVLSMTPLN) is cleaved from the precursor. Residues 447 to 471 (RARAAAAGFEKGIDRDFEPVLSMTP) form a helical membrane-spanning segment.

It belongs to the PsbB/PsbC family. PsbC subfamily. As to quaternary structure, PSII is composed of 1 copy each of membrane proteins PsbA, PsbB, PsbC, PsbD, PsbE, PsbF, PsbH, PsbI, PsbJ, PsbK, PsbL, PsbM, PsbT, PsbX, PsbY, PsbZ, Psb30/Ycf12, at least 3 peripheral proteins of the oxygen-evolving complex and a large number of cofactors. It forms dimeric complexes. The cofactor is Binds multiple chlorophylls and provides some of the ligands for the Ca-4Mn-5O cluster of the oxygen-evolving complex. It may also provide a ligand for a Cl- that is required for oxygen evolution. PSII binds additional chlorophylls, carotenoids and specific lipids.. In terms of processing, over time a tryptophan in the fifth lumenal loop is converted to 2-hydroxy-2,3-dihydrotryptophan, 2-oxo-2,3-dihydrotryptophan, and kynurenine by oxidizing species from the active site. This oxidation targets the protein for turnover.

It localises to the plastid. Its subcellular location is the chloroplast thylakoid membrane. In terms of biological role, one of the components of the core complex of photosystem II (PSII). It binds chlorophyll and helps catalyze the primary light-induced photochemical processes of PSII. PSII is a light-driven water:plastoquinone oxidoreductase, using light energy to abstract electrons from H(2)O, generating O(2) and a proton gradient subsequently used for ATP formation. This is Photosystem II CP43 reaction center protein from Spinacia oleracea (Spinach).